The sequence spans 348 residues: MTALALPRLGVTLYSFTPYYHAREYSFEDLIRIAGERDLGPGLEIVGYQSIKGFPKLPDGFVKDFRRRVDEAGLELSAMGANADAGIPHDRLLNEDELTEYMAHQLHTAKELGFPIVRVQHSVTPDLMERLLPLAEKLDLTMGMEIHSPHSVHHPKIQALVERYEKLGSPHLGFIPDWGASLTRLPPSALQTYAAADVPRELLDAYDRQWDVFHAEGVITTDAEQGAQFRRMRELNERFGGDDVSVRIGTNAVGLFGHQRPEDWSAIMPWVVHVHGKFYGIDENGEEPSVPHGLLLRQLVDAGYTGYISSEWEGWHWNTTDDPFEMVAWQHRLMRRIFGEIEAEAGVR.

Glutamate 145 provides a ligand contact to Mg(2+). The active-site Proton acceptor is histidine 147. The Mg(2+) site is built by aspartate 177, histidine 275, and glutamate 311.

The protein belongs to the C-glycoside deglycosidase alpha subunit family. In terms of assembly, heterodimer composed of an alpha subunit (CarB) and a beta subunit (CarC). Mg(2+) serves as cofactor.

The enzyme catalyses 3'-dehydrocarminate + H(+) = kermesate + 1,5-anhydro-D-erythro-hex-1-en-3-ulose. With respect to regulation, activity is strongly reduced in the presence of chelating agents. Its function is as follows. Carbon-carbon bond-cleaving enzyme which participates in a carminate degradation pathway. Cleaves the C-C bond in 3'-dehydrocarminate to form kermesate. Also shows weak activity with other C-glycosides, such as 3''-dehydropuerarin (3''-oxo-puerarin), 3''-dehydroisoorientin (3''-oxo-homoorientin) and 3'-dehydromangiferin (3'-oxo-mangiferin). The sequence is that of 3'-dehydrocarminate deglycosidase alpha subunit from Microbacterium sp.